The primary structure comprises 169 residues: Phycobiliprotein beta chain (169 aa).

N4-methylasparagine is present on asparagine 72. Cysteine 82 lines the (2R,3E)-phycocyanobilin pocket.

This sequence belongs to the phycobiliprotein family. Heterodimer of an alpha and a beta chain. Post-translationally, contains one covalently linked bilin chromophore.

Its subcellular location is the cellular thylakoid membrane. Light-harvesting photosynthetic bile pigment-protein from the phycobiliprotein complex. This is a protein functionally equivalent to, but with weaker absorbance than, allophycocyanin beta chain. In Mastigocladus laminosus (Fischerella sp.), this protein is Phycobiliprotein beta chain (apcD).